A 105-amino-acid chain; its full sequence is Ketoisovalerate oxidoreductase subunit VorD (105 aa).

4Fe-4S ferredoxin-type domains lie at 44–73 and 74–103; these read FKPVVNEEKCVKCYICWKYCPEPAIYIKPD and GYVAIDYDYCKGCGICANECPTKAITMIKE. Positions 53, 56, 59, 63, 83, 86, 89, and 93 each coordinate [4Fe-4S] cluster.

As to quaternary structure, heterotetramer of one alpha, one beta, one delta and one gamma chain. [4Fe-4S] cluster serves as cofactor.

The enzyme catalyses 3-methyl-2-oxobutanoate + 2 oxidized [2Fe-2S]-[ferredoxin] + CoA = 2-methylpropanoyl-CoA + 2 reduced [2Fe-2S]-[ferredoxin] + CO2 + H(+). In Pyrococcus furiosus (strain ATCC 43587 / DSM 3638 / JCM 8422 / Vc1), this protein is Ketoisovalerate oxidoreductase subunit VorD (vorD).